A 178-amino-acid polypeptide reads, in one-letter code: Stathmin-2-B (178 aa).

The SLD domain maps to 38–178; it reads DDMEVKQLNK…KNKEQLELSG (141 aa). Residues 75 to 178 are a coiled coil; sequence KRKDVSLEEI…KNKEQLELSG (104 aa).

This sequence belongs to the stathmin family. Nervous tissue.

The protein localises to the cytoplasm. It localises to the membrane. It is found in the cell projection. The protein resides in the lamellipodium. This chain is Stathmin-2-B (stmn2-b), found in Xenopus laevis (African clawed frog).